We begin with the raw amino-acid sequence, 369 residues long: Cellular tumor antigen p53 (369 aa).

Positions Met-1–Ile-28 are transcription activation (acidic). Residues Asp-66–Asp-256 mediate DNA binding. Cys-140, His-143, Cys-202, and Cys-206 together coordinate Zn(2+). Positions Arg-237 to Arg-244 are interaction with DNA. Residues Arg-246–Asp-263 show a composition bias toward basic and acidic residues. Disordered regions lie at residues Arg-246–Ser-296 and Asn-318–Asp-369. Residues Asn-269–Val-281 show a composition bias toward polar residues. Residues Lys-270–Lys-289 carry the Bipartite nuclear localization signal motif. Residues Glu-298–Pro-329 are oligomerization. Positions Glu-312–Leu-323 match the Nuclear export signal motif. The segment at Lys-342 to Lys-365 is basic (repression of DNA-binding). Residues Lys-346–Asp-369 show a composition bias toward basic and acidic residues.

The protein belongs to the p53 family. In terms of assembly, binds DNA as a homotetramer. Zn(2+) serves as cofactor.

The protein resides in the cytoplasm. It localises to the nucleus. Multifunctional transcription factor that induces cell cycle arrest, DNA repair or apoptosis upon binding to its target DNA sequence. Acts as a tumor suppressor in many tumor types; induces growth arrest or apoptosis depending on the physiological circumstances and cell type. Negatively regulates cell division by controlling expression of a set of genes required for this process. One of the activated genes is an inhibitor of cyclin-dependent kinases. Apoptosis induction seems to be mediated either by stimulation of BAX and FAS antigen expression, or by repression of Bcl-2 expression. The polypeptide is Cellular tumor antigen p53 (tp53) (Barbus barbus (Barbel)).